Consider the following 553-residue polypeptide: Putative transport protein YidE (553 aa).

The next 5 helical transmembrane spans lie at 4 to 24 (IALTVSILALVAVVGLFIGNV), 28 to 48 (GIGLGIGGVLFGGIIVGHFVS), 65 to 85 (FGLILFVYTIGIQVGPGFFAS), 95 to 115 (LFAVLIVIIGGLVTAILHKLF), and 158 to 178 (MSYAMAYPFGICGILFTMWML). RCK C-terminal domains follow at residues 191 to 276 (QQHE…VIGQ) and 279 to 361 (DTSL…VLGN). Helical transmembrane passes span 371–391 (MLPVFIGIGLGVLLGSIPVFV), 393–413 (GFPAALKLGLAGGPLIMALIL), 439–459 (IVLFLSIVGLKSGGDFVNTLV), 464–484 (LSWIGYGALITAVPLITVGIL), 493–513 (YLTMCGMLAGSMTDPPALAFA), and 533–553 (LVMFLRIITPQLLAVLFWSIG).

The protein belongs to the AAE transporter (TC 2.A.81) family. YidE subfamily.

It localises to the cell membrane. The protein is Putative transport protein YidE of Shigella flexneri serotype 5b (strain 8401).